The chain runs to 1097 residues: MSTSQPSQQQNPEQVVNDIRQKIEKERKIIQGFNDVKRNTNNPEVIQKWKSKIIESQSMIDYYQETMNKLTRQMQRLNTNSSSRTASRSSVISEYKPSYSNFDLIKYECPSLGNKIQFMLQYLEFKLQVENKYSEANKKLSHLYLMDGDKSSSNAAEGGRAESDQRIQLLEKALKKYQKFSINDHEFDRDYEIMDSTKHSRKLLTGRLTVSITCIRDVDHIATALAKKRETVVVIKVDDLEKARTKPSKNDNWNEEMVIDVDKSHEIELAVMDKQNGIYVPVAVNWFSLFDLAEEIRKKKVAKDQGSSGWLPAANLPQTGGSGAGTGSSMTGGASYGATSPLPAHNDLRPSVSPSSDAKENKVSVSTWLSLEPGGQMLINLNFEKSITNGKQFRGPLGRHGAIRQKKEEVFEKHGHQFVQKQFYNIMSCALCGEFLRYTGYQCQDCKFLCHKKCYQKVVTKCISKSGSDYDAAQLNHRIPHRFEPITNHGTKWCCHCGYILPWGKKNVRKCTECGVMCHAQCTHLVPDFCGMSLQMANEILATIESTKVSPKKAQHQQSHAKPLPPKPPIESKPSMDSEETLHNEPSYKSLRPASVVHQDTNFVSKLPTTVQNKYQEPVELPPQQQNQVVPSTRRRGHGSTDLSFETGYGQQQHQHHRDVPQIVVEDHQHYNSNDNRDVEMEESKDEFDNFDYNNKYTENEILTDVQQDQVRSPFADQIQGVPETSHAKQQNQQVQQVQQQEELGHQRTHSSGKSGKSKRRKRKVGLDDFQFLAVLGKGNFGKVMLAESRHTSKLCAIKVLKKDFIVENDEAESVKSEKRVFLTANKEMHPFLLNLHCCFQTENRIYFVMEYISGGDLMWHIQKNRFTAKRAKFYACEVLLGLKYFHDNGIVYRDLKLDNILLTTKGHIKIGDYGLCKEDMWHKSTTSTFCGTPEFMAPEIVAGKAYDRSVDWWAFGVLLFQMLLCQSPFKGDDEDDIFNAIENDEVKYPINLSRQTVLVLQALLTKDPSQRLGSGPKDAEEIMEHPYFHDVNFDDVLNCRIPAPYIPEVQSEHDYSNFDKEFTSETPRLTPVETVLTSEMQEQFRGFSHISDNATI.

2 consecutive REM-1 domains span residues 2-76 and 106-183; these read STSQ…QMQR and KYEC…FSIN. A C2 domain is found at 189–311; that stretch reads RDYEIMDSTK…AKDQGSSGWL (123 aa). The interval 304-359 is disordered; sequence DQGSSGWLPAANLPQTGGSGAGTGSSMTGGASYGATSPLPAHNDLRPSVSPSSDAK. The segment covering 327–340 has biased composition (low complexity); sequence GSSMTGGASYGATS. 2 Phorbol-ester/DAG-type zinc fingers span residues 415-462 and 480-530; these read GHQF…VTKC and PHRF…PDFC. Disordered regions lie at residues 548 to 594, 615 to 646, and 724 to 763; these read KVSP…LRPA, YQEPVELPPQQQNQVVPSTRRRGHGSTDLSFE, and ETSHAKQQNQQVQQVQQQEELGHQRTHSSGKSGKSKRRKR. The span at 574 to 583 shows a compositional bias: basic and acidic residues; the sequence is PSMDSEETLH. The segment covering 730 to 741 has biased composition (low complexity); that stretch reads QQNQQVQQVQQQ. Residues 747 to 763 show a composition bias toward basic residues; sequence QRTHSSGKSGKSKRRKR. In terms of domain architecture, Protein kinase spans 770–1029; sequence FQFLAVLGKG…AEEIMEHPYF (260 aa). ATP is bound by residues 776–784 and lysine 799; that span reads LGKGNFGKV. Aspartate 895 (proton acceptor) is an active-site residue. Positions 1030-1097 constitute an AGC-kinase C-terminal domain; sequence HDVNFDDVLN…FSHISDNATI (68 aa).

Belongs to the protein kinase superfamily. AGC Ser/Thr protein kinase family. PKC subfamily.

It carries out the reaction L-seryl-[protein] + ATP = O-phospho-L-seryl-[protein] + ADP + H(+). The enzyme catalyses L-threonyl-[protein] + ATP = O-phospho-L-threonyl-[protein] + ADP + H(+). Functionally, necessary for osmotic stability. The polypeptide is Protein kinase C-like 1 (PKC1) (Candida albicans (Yeast)).